We begin with the raw amino-acid sequence, 453 residues long: Phenylalanine-4-hydroxylase (453 aa).

The residue at position 2 (A2) is an N-acetylalanine. A Phosphoserine modification is found at S16. The ACT domain occupies 36 to 114 (SLIFSLKEEV…TVHELSRDKE (79 aa)). Residues H285, H290, and E330 each coordinate Fe cation.

Belongs to the biopterin-dependent aromatic amino acid hydroxylase family. Homodimer and homotetramer. Fe(2+) is required as a cofactor. Phosphorylation at Ser-16 increases basal activity and facilitates activation by the substrate phenylalanine.

The enzyme catalyses (6R)-L-erythro-5,6,7,8-tetrahydrobiopterin + L-phenylalanine + O2 = (4aS,6R)-4a-hydroxy-L-erythro-5,6,7,8-tetrahydrobiopterin + L-tyrosine. The protein operates within amino-acid degradation; L-phenylalanine degradation; acetoacetate and fumarate from L-phenylalanine: step 1/6. Its activity is regulated as follows. N-terminal region of PAH is thought to contain allosteric binding sites for phenylalanine and to constitute an 'inhibitory' domain that regulates the activity of a catalytic domain in the C-terminal portion of the molecule. Catalyzes the hydroxylation of L-phenylalanine to L-tyrosine. The protein is Phenylalanine-4-hydroxylase (Pah) of Mus musculus (Mouse).